We begin with the raw amino-acid sequence, 1063 residues long: Cobalt-zinc-cadmium resistance protein CzcA (1063 aa).

12 helical membrane passes run 14-34, 350-370, 371-391, 395-415, 452-472, 487-507, 534-554, 883-903, 906-926, 937-957, 981-1001, and 1013-1033; these read WLVL…YNRL, GAVL…AALI, TATI…NYKI, LMSL…VIVE, LIFG…LTGV, ALLG…ALFI, LANT…CVAI, VVVP…FNNI, GLLV…ALWI, VGFI…LSFI, PVLM…IATG, and VVIG…PVLY. Residues 1040 to 1063 are disordered; sequence DEDAEDTREPVTQTHQPDQGRQPA. A compositionally biased stretch (polar residues) spans 1049–1063; that stretch reads PVTQTHQPDQGRQPA.

Belongs to the resistance-nodulation-cell division (RND) (TC 2.A.6) family.

It localises to the cell inner membrane. Has a low cation transport activity for cobalt, it is essential for the expression of cobalt, zinc, and cadmium resistance. CzcA and CzcB together would act in zinc efflux nearly as effectively as the complete CZC efflux system (CzcABC). This Cupriavidus metallidurans (strain ATCC 43123 / DSM 2839 / NBRC 102507 / CH34) (Ralstonia metallidurans) protein is Cobalt-zinc-cadmium resistance protein CzcA (czcA).